The following is a 221-amino-acid chain: Pyridoxal phosphate homeostasis protein (221 aa).

N6-(pyridoxal phosphate)lysine is present on Lys26.

This sequence belongs to the pyridoxal phosphate-binding protein YggS/PROSC family.

In terms of biological role, pyridoxal 5'-phosphate (PLP)-binding protein, which is involved in PLP homeostasis. In Corynebacterium glutamicum (strain ATCC 13032 / DSM 20300 / JCM 1318 / BCRC 11384 / CCUG 27702 / LMG 3730 / NBRC 12168 / NCIMB 10025 / NRRL B-2784 / 534), this protein is Pyridoxal phosphate homeostasis protein.